The chain runs to 360 residues: (+)-6a-hydroxymaackiain 3-O-methyltransferase 2 (360 aa).

S-adenosyl-L-methionine is bound by residues 202–205, Asp226, 226–227, 246–247, and Lys260; these read VAGG, DQ, and DM. His264 serves as the catalytic Proton acceptor.

The protein belongs to the class I-like SAM-binding methyltransferase superfamily. Cation-independent O-methyltransferase family. COMT subfamily.

The catalysed reaction is (+)-6a-hydroxymaackiain + S-adenosyl-L-methionine = (+)-pisatin + S-adenosyl-L-homocysteine + H(+). 3-O-methyltransferase involved in the phytoalexin pisatin biosynthesis. Can use (+)-6a-hydroxymaackiain, (+)-maackiain and with a lower activity (+)-medicarpin and 2,7,4'-trihydroxyisoflavanone as substrates, but not (-)-6a-hydroxymaackiain, daidzein, formononetin or isoliquiritigenin. The polypeptide is (+)-6a-hydroxymaackiain 3-O-methyltransferase 2 (HMM2) (Pisum sativum (Garden pea)).